The sequence spans 332 residues: 4-hydroxy-3-methylbut-2-enyl diphosphate reductase (332 aa).

A [4Fe-4S] cluster-binding site is contributed by cysteine 34. Histidine 63 and histidine 96 together coordinate (2E)-4-hydroxy-3-methylbut-2-enyl diphosphate. 2 residues coordinate dimethylallyl diphosphate: histidine 63 and histidine 96. The isopentenyl diphosphate site is built by histidine 63 and histidine 96. Cysteine 118 lines the [4Fe-4S] cluster pocket. Histidine 146 contributes to the (2E)-4-hydroxy-3-methylbut-2-enyl diphosphate binding site. Position 146 (histidine 146) interacts with dimethylallyl diphosphate. Histidine 146 is a binding site for isopentenyl diphosphate. Glutamate 148 functions as the Proton donor in the catalytic mechanism. Threonine 186 provides a ligand contact to (2E)-4-hydroxy-3-methylbut-2-enyl diphosphate. Cysteine 216 provides a ligand contact to [4Fe-4S] cluster. (2E)-4-hydroxy-3-methylbut-2-enyl diphosphate contacts are provided by serine 244, serine 245, asparagine 246, and serine 289. The dimethylallyl diphosphate site is built by serine 244, serine 245, asparagine 246, and serine 289. Residues serine 244, serine 245, asparagine 246, and serine 289 each coordinate isopentenyl diphosphate.

Belongs to the IspH family. It depends on [4Fe-4S] cluster as a cofactor.

The enzyme catalyses isopentenyl diphosphate + 2 oxidized [2Fe-2S]-[ferredoxin] + H2O = (2E)-4-hydroxy-3-methylbut-2-enyl diphosphate + 2 reduced [2Fe-2S]-[ferredoxin] + 2 H(+). It catalyses the reaction dimethylallyl diphosphate + 2 oxidized [2Fe-2S]-[ferredoxin] + H2O = (2E)-4-hydroxy-3-methylbut-2-enyl diphosphate + 2 reduced [2Fe-2S]-[ferredoxin] + 2 H(+). It participates in isoprenoid biosynthesis; dimethylallyl diphosphate biosynthesis; dimethylallyl diphosphate from (2E)-4-hydroxy-3-methylbutenyl diphosphate: step 1/1. The protein operates within isoprenoid biosynthesis; isopentenyl diphosphate biosynthesis via DXP pathway; isopentenyl diphosphate from 1-deoxy-D-xylulose 5-phosphate: step 6/6. Catalyzes the conversion of 1-hydroxy-2-methyl-2-(E)-butenyl 4-diphosphate (HMBPP) into a mixture of isopentenyl diphosphate (IPP) and dimethylallyl diphosphate (DMAPP). Acts in the terminal step of the DOXP/MEP pathway for isoprenoid precursor biosynthesis. This chain is 4-hydroxy-3-methylbut-2-enyl diphosphate reductase, found in Mycobacterium ulcerans (strain Agy99).